We begin with the raw amino-acid sequence, 202 residues long: Dephospho-CoA kinase (202 aa).

Positions 4–202 constitute a DPCK domain; the sequence is FLGLTGGIAT…EGVCHKSGMS (199 aa). 12-17 serves as a coordination point for ATP; sequence ATGKTT.

Belongs to the CoaE family.

The protein localises to the cytoplasm. It carries out the reaction 3'-dephospho-CoA + ATP = ADP + CoA + H(+). It participates in cofactor biosynthesis; coenzyme A biosynthesis; CoA from (R)-pantothenate: step 5/5. Functionally, catalyzes the phosphorylation of the 3'-hydroxyl group of dephosphocoenzyme A to form coenzyme A. In Latilactobacillus sakei subsp. sakei (strain 23K) (Lactobacillus sakei subsp. sakei), this protein is Dephospho-CoA kinase.